The primary structure comprises 100 residues: Integration host factor subunit beta (100 aa).

The disordered stretch occupies residues 81–100 (KPGKELRDRVNEDEHEEAHT). Over residues 82 to 100 (PGKELRDRVNEDEHEEAHT) the composition is skewed to basic and acidic residues.

The protein belongs to the bacterial histone-like protein family. Heterodimer of an alpha and a beta chain.

Its function is as follows. This protein is one of the two subunits of integration host factor, a specific DNA-binding protein that functions in genetic recombination as well as in transcriptional and translational control. This chain is Integration host factor subunit beta (ihfB), found in Pseudomonas putida (Arthrobacter siderocapsulatus).